A 225-amino-acid chain; its full sequence is ATP-dependent dethiobiotin synthetase BioD 1 (225 aa).

Positions 13 and 17 each coordinate Mg(2+). Position 13 to 18 (Glu-13 to Val-18) interacts with ATP. Lys-38 is a catalytic residue. Ser-42 contributes to the substrate binding site. Residues Asp-55 and Glu-116 each contribute to the Mg(2+) site. ATP-binding positions include Asp-55, Glu-116–Gly-119, and Asn-176–Asp-177. Tyr-188 lines the substrate pocket. ATP contacts are provided by residues Pro-205–Leu-207 and Glu-212.

This sequence belongs to the dethiobiotin synthetase family. In terms of assembly, homodimer. Requires Mg(2+) as cofactor.

It is found in the cytoplasm. The catalysed reaction is (7R,8S)-7,8-diammoniononanoate + CO2 + ATP = (4R,5S)-dethiobiotin + ADP + phosphate + 3 H(+). Its pathway is cofactor biosynthesis; biotin biosynthesis; biotin from 7,8-diaminononanoate: step 1/2. In terms of biological role, catalyzes a mechanistically unusual reaction, the ATP-dependent insertion of CO2 between the N7 and N8 nitrogen atoms of 7,8-diaminopelargonic acid (DAPA, also called 7,8-diammoniononanoate) to form a ureido ring. Only CTP can partially replace ATP while diaminobiotin is only 37% as effective as 7,8-diaminopelargonic acid. In another study both CTP and GTP (but not ITP, TTP or UTP) can partially replace ATP. The chain is ATP-dependent dethiobiotin synthetase BioD 1 from Escherichia coli (strain K12).